Here is a 397-residue protein sequence, read N- to C-terminus: Xylose isomerase (397 aa).

Residues H54 and D57 contribute to the active site. Mg(2+) contacts are provided by E181, E217, H220, D245, D255, D257, and D293.

Belongs to the xylose isomerase family. As to quaternary structure, homotetramer. Mg(2+) is required as a cofactor.

The protein resides in the cytoplasm. The enzyme catalyses alpha-D-xylose = alpha-D-xylulofuranose. This Clavibacter sepedonicus (Clavibacter michiganensis subsp. sepedonicus) protein is Xylose isomerase.